Consider the following 250-residue polypeptide: 2,3-bisphosphoglycerate-dependent phosphoglycerate mutase (250 aa).

Substrate-binding positions include 10 to 17 (RHGESQWN), 23 to 24 (TG), Arg-62, 89 to 92 (ERHY), Lys-100, 116 to 117 (RR), and 185 to 186 (GN). Residue His-11 is the Tele-phosphohistidine intermediate of the active site. The Proton donor/acceptor role is filled by Glu-89.

This sequence belongs to the phosphoglycerate mutase family. BPG-dependent PGAM subfamily. Homodimer.

It carries out the reaction (2R)-2-phosphoglycerate = (2R)-3-phosphoglycerate. Its pathway is carbohydrate degradation; glycolysis; pyruvate from D-glyceraldehyde 3-phosphate: step 3/5. In terms of biological role, catalyzes the interconversion of 2-phosphoglycerate and 3-phosphoglycerate. The chain is 2,3-bisphosphoglycerate-dependent phosphoglycerate mutase from Yersinia enterocolitica serotype O:8 / biotype 1B (strain NCTC 13174 / 8081).